The sequence spans 478 residues: Bifunctional protein HldE (478 aa).

The ribokinase stretch occupies residues 1–318 (MKVTLPDFRQ…ENAIRGRADT (318 aa)). ATP is bound at residue 195-198 (NLSE). Aspartate 264 is a catalytic residue. The tract at residues 344-478 (MTNGCFDILH…NTIKANASKS (135 aa)) is cytidylyltransferase.

This sequence in the N-terminal section; belongs to the carbohydrate kinase PfkB family. In the C-terminal section; belongs to the cytidylyltransferase family. As to quaternary structure, homodimer.

The catalysed reaction is D-glycero-beta-D-manno-heptose 7-phosphate + ATP = D-glycero-beta-D-manno-heptose 1,7-bisphosphate + ADP + H(+). It carries out the reaction D-glycero-beta-D-manno-heptose 1-phosphate + ATP + H(+) = ADP-D-glycero-beta-D-manno-heptose + diphosphate. It functions in the pathway nucleotide-sugar biosynthesis; ADP-L-glycero-beta-D-manno-heptose biosynthesis; ADP-L-glycero-beta-D-manno-heptose from D-glycero-beta-D-manno-heptose 7-phosphate: step 1/4. It participates in nucleotide-sugar biosynthesis; ADP-L-glycero-beta-D-manno-heptose biosynthesis; ADP-L-glycero-beta-D-manno-heptose from D-glycero-beta-D-manno-heptose 7-phosphate: step 3/4. In terms of biological role, catalyzes the phosphorylation of D-glycero-D-manno-heptose 7-phosphate at the C-1 position to selectively form D-glycero-beta-D-manno-heptose-1,7-bisphosphate. Its function is as follows. Catalyzes the ADP transfer from ATP to D-glycero-beta-D-manno-heptose 1-phosphate, yielding ADP-D-glycero-beta-D-manno-heptose. This is Bifunctional protein HldE from Pectobacterium carotovorum subsp. carotovorum (strain PC1).